Reading from the N-terminus, the 233-residue chain is Probable 2-phosphosulfolactate phosphatase (233 aa).

Belongs to the ComB family. Mg(2+) serves as cofactor.

It carries out the reaction (2R)-O-phospho-3-sulfolactate + H2O = (2R)-3-sulfolactate + phosphate. The protein is Probable 2-phosphosulfolactate phosphatase of Symbiobacterium thermophilum (strain DSM 24528 / JCM 14929 / IAM 14863 / T).